Consider the following 663-residue polypeptide: Protein-arginine deiminase type-1 (663 aa).

Positions 153, 155, 157, 165, 176, 179, 351, 353, 364, 371, 372, 375, 409, and 412 each coordinate Ca(2+). Cys645 functions as the Nucleophile in the catalytic mechanism.

It belongs to the protein arginine deiminase family. In terms of assembly, monomer. The cofactor is Ca(2+). Detected in epidermal keratinocytes (at protein level). Epidermis, prostate, testis, placenta, spleen and thymus.

Its subcellular location is the cytoplasm. It carries out the reaction L-arginyl-[protein] + H2O = L-citrullyl-[protein] + NH4(+). Catalyzes the deimination of arginine residues of proteins. The chain is Protein-arginine deiminase type-1 (PADI1) from Homo sapiens (Human).